A 38-amino-acid polypeptide reads, in one-letter code: Cytochrome b6-f complex subunit 5 (38 aa).

Residues 5 to 25 (LLLGIVLGLIPVTLAGLFVAA) traverse the membrane as a helical segment.

This sequence belongs to the PetG family. The 4 large subunits of the cytochrome b6-f complex are cytochrome b6, subunit IV (17 kDa polypeptide, PetD), cytochrome f and the Rieske protein, while the 4 small subunits are PetG, PetL, PetM and PetN. The complex functions as a dimer.

Its subcellular location is the cellular thylakoid membrane. Its function is as follows. Component of the cytochrome b6-f complex, which mediates electron transfer between photosystem II (PSII) and photosystem I (PSI), cyclic electron flow around PSI, and state transitions. PetG is required for either the stability or assembly of the cytochrome b6-f complex. The sequence is that of Cytochrome b6-f complex subunit 5 from Picosynechococcus sp. (strain ATCC 27264 / PCC 7002 / PR-6) (Agmenellum quadruplicatum).